The chain runs to 444 residues: N-succinylarginine dihydrolase (444 aa).

Substrate contacts are provided by residues 19-28 (AGLSFGNVAS), Asn-110, and 137-138 (HR). Glu-174 is an active-site residue. Arg-214 contacts substrate. The active site involves His-250. Substrate is bound by residues Asp-252 and Asn-362. Cys-368 serves as the catalytic Nucleophile.

This sequence belongs to the succinylarginine dihydrolase family. In terms of assembly, homodimer.

It catalyses the reaction N(2)-succinyl-L-arginine + 2 H2O + 2 H(+) = N(2)-succinyl-L-ornithine + 2 NH4(+) + CO2. It functions in the pathway amino-acid degradation; L-arginine degradation via AST pathway; L-glutamate and succinate from L-arginine: step 2/5. In terms of biological role, catalyzes the hydrolysis of N(2)-succinylarginine into N(2)-succinylornithine, ammonia and CO(2). The chain is N-succinylarginine dihydrolase from Shewanella putrefaciens (strain CN-32 / ATCC BAA-453).